A 446-amino-acid polypeptide reads, in one-letter code: Tubulin beta chain (446 aa).

GTP-binding residues include glutamine 11, glutamate 69, serine 138, glycine 142, threonine 143, glycine 144, asparagine 204, and asparagine 226. Glutamate 69 is a binding site for Mg(2+). The segment at 427–446 (EAGVDEGEEFEEEEDFGDEQ) is disordered. Residues 429–446 (GVDEGEEFEEEEDFGDEQ) show a composition bias toward acidic residues.

It belongs to the tubulin family. In terms of assembly, dimer of alpha and beta chains. A typical microtubule is a hollow water-filled tube with an outer diameter of 25 nm and an inner diameter of 15 nM. Alpha-beta heterodimers associate head-to-tail to form protofilaments running lengthwise along the microtubule wall with the beta-tubulin subunit facing the microtubule plus end conferring a structural polarity. Microtubules usually have 13 protofilaments but different protofilament numbers can be found in some organisms and specialized cells. Mg(2+) is required as a cofactor.

The protein resides in the cytoplasm. It is found in the cytoskeleton. Tubulin is the major constituent of microtubules, a cylinder consisting of laterally associated linear protofilaments composed of alpha- and beta-tubulin heterodimers. Microtubules grow by the addition of GTP-tubulin dimers to the microtubule end, where a stabilizing cap forms. Below the cap, tubulin dimers are in GDP-bound state, owing to GTPase activity of alpha-tubulin. The protein is Tubulin beta chain of Giardia intestinalis (Giardia lamblia).